The sequence spans 344 residues: Selenide, water dikinase (344 aa).

Cysteine 15 is an active-site residue. Residues lysine 18 and 46-48 (TKD) contribute to the ATP site. Aspartate 49 lines the Mg(2+) pocket. ATP contacts are provided by residues aspartate 66, aspartate 89, and 137-139 (GHS). Residue aspartate 89 participates in Mg(2+) binding. Aspartate 225 provides a ligand contact to Mg(2+).

It belongs to the selenophosphate synthase 1 family. Class I subfamily. As to quaternary structure, homodimer. Mg(2+) serves as cofactor.

It carries out the reaction hydrogenselenide + ATP + H2O = selenophosphate + AMP + phosphate + 2 H(+). Synthesizes selenophosphate from selenide and ATP. This chain is Selenide, water dikinase, found in Colwellia psychrerythraea (strain 34H / ATCC BAA-681) (Vibrio psychroerythus).